The chain runs to 1755 residues: MESQQLSNYPNISHGSACASVTSKEVHTNQDPLDVSASKIQEYDKASTKANSQQTTTPASSAVPENLHHASPQPASVPPPQNGPYPQQCMMTQNQANPSGWSFYGHPSMIPYTPYQMSPMYFPPGPQSQFPQYPSSVGTPLSTPSPESGNTFTDSSSADSDMTSTKKYVRPPPMLTSPNDFPNWVKTYIKFLQNSNLGGIIPTVNGKPVRQITDDELTFLYNTFQIFAPSQFLPTWVKDILSVDYTDIMKILSKSIEKMQSDTQEANDIVTLANLQYNGSTPADAFETKVTNIIDRLNNNGIHINNKVACQLIMRGLSGEYKFLRYTRHRHLNMTVAELFLDIHAIYEEQQGSRNSKPNYRRNPSDEKNDSRSYTNTTKPKVIARNPQKTNNSKSKTARAHNVSTSNNSPSTDNDSISKSTTEPIQLNNKHDLHLGQKLTESTVNHTNHSDDELPGHLLLDSGASRTLIRSAHHIHSASSNPDINVVDAQKRNIPINAIGDLQFHFQDNTKTSIKVLHTPNIAYDLLSLNELAAVDITACFTKNVLERSDGTVLAPIVKYGDFYWVSKKYLLPSNISVPTINNVHTSESTRKYPYPFIHRMLAHANAQTIRYSLKNNTITYFNESDVDWSSAIDYQCPDCLIGKSTKHRHIKGSRLKYQNSYEPFQYLHTDIFGPVHNLPKSAPSYFISFTDETTKFRWVYPLHDRREDSILDVFTTILAFIKNQFQASVLVIQMDRGSEYTNRTLHKFLEKNGITPCYTTTADSRAHGVAERLNRTLLDDCRTQLQCSGLPNHLWFSAIEFSTIVRNSLASPKSKKSARQHAGLAGLDISTLLPFGQPVIVNDHNPNSKIHPRGIPGYALHPSRNSYGYIIYLPSLKKTVDTTNYVILQGKESRLDQFNYDALTFDEDLNRLTASYQSFIASNEIQQSDDLNIESDHDFQSDIELHPEQPRNVLSKAVSPTDSTPPSTHTEDSKRVSKTNIRAPREVDPNISESNILPSKKRSSTPQISNIESTGSGGMHKLNVPLLAPMSQSNTHESSHASKSKDFRHSDSYSENETNHTNVPISSTGGTNNKTVPQISDQETEKRIIHRSPSIDASPPENNSSHNIVPIKTPTTVSEQNTEESIIADLPLPDLPPESPTEFPDPFKELPPINSHQTNSSLGGIGDSNAYTTINSKKRSLEDNETEIKVSRDTWNTKNMRSLEPPRSKKRIHLIAAVKAVKSIKPIRTTLRYDEAITYNKDIKEKEKYIEAYHKEVNQLLKMNTWDTDKYYDRKEIDPKRVINSMFIFNRKRDGTHKARFVARGDIQHPDTYDSGMQSNTVHHYALMTSLSLALDNNYYITQLDISSAYLYADIKEELYIRPPPHLGMNDKLIRLKKSLYGLKQSGANWYETIKSYLIKQCGMEEVRGWSCVFKNSQVTICLFVDDMILFSKDLNANKKIITTLKKQYDTKIINLGESDNEIQYDILGLEIKYQRGKYMKLGMENSLTEKIPKLNVPLNPKGRKLSAPGQPGLYIDQDELEIDEDEYKEKVHEMQKLIGLASYVGYKFRFDLLYYINTLAQHILFPSRQVLDMTYELIQFMWDTRDKQLIWHKNKPTEPDNKLVAISDASYGNQPYYKSQIGNIYLLNGKVIGGKSTKASLTCTSTTEAEIHAISESVPLLNNLSHLVQELNKKPITKGLLTDSKSTISIIISNNEEKFRNRFFGTKAMRLRDEVSGNHLHVCYIETKKNIADVMTKPLPIKTFKLLTNKWIH.

3 stretches are compositionally biased toward polar residues: residues 1–23 (MESQ…SVTS), 48–60 (TKAN…TPAS), and 127–152 (QSQF…GNTF). Disordered regions lie at residues 1 to 88 (MESQ…YPQQ), 126 to 173 (PQSQ…RPPP), and 352 to 421 (GSRN…SKST). Over residues 153–165 (TDSSSADSDMTST) the composition is skewed to low complexity. The interval 299-401 (NNGIHINNKV…NSKSKTARAH (103 aa)) is RNA-binding. The span at 402–418 (NVSTSNNSPSTDNDSIS) shows a compositional bias: low complexity. The For protease activity; shared with dimeric partner role is filled by D461. An integrase-type zinc finger-like region spans residues 583–640 (NVHTSESTRKYPYPFIHRMLAHANAQTIRYSLKNNTITYFNESDVDWSSAIDYQCPDC). The region spanning 660-835 (NSYEPFQYLH…AGLDISTLLP (176 aa)) is the Integrase catalytic domain. D671 and D736 together coordinate Mg(2+). Disordered regions lie at residues 956–1087 (SKAV…ETEK), 1092–1111 (RSPS…NIVP), and 1130–1171 (DLPL…DSNA). Positions 960 to 969 (SPTDSTPPST) are enriched in low complexity. Polar residues predominate over residues 1005–1015 (STPQISNIEST). Residues 1038–1053 (ESSHASKSKDFRHSDS) show a composition bias toward basic and acidic residues. 2 stretches are compositionally biased toward polar residues: residues 1054 to 1082 (YSEN…QISD) and 1101 to 1111 (PENNSSHNIVP). A Bipartite nuclear localization signal motif is present at residues 1178 to 1212 (KKRSLEDNETEIKVSRDTWNTKNMRSLEPPRSKKR). The Reverse transcriptase Ty1/copia-type domain maps to 1338 to 1476 (NNYYITQLDI…DILGLEIKYQ (139 aa)). Mg(2+) contacts are provided by D1346, D1427, D1428, D1610, E1652, and D1685. Residues 1610-1752 (DASYGNQPYY…IKTFKLLTNK (143 aa)) form the RNase H Ty1/copia-type domain.

In terms of assembly, the capsid protein forms a homotrimer, from which the VLPs are assembled. The protease is a homodimer, whose active site consists of two apposed aspartic acid residues. In terms of processing, initially, virus-like particles (VLPs) are composed of the structural unprocessed proteins Gag and Gag-Pol, and also contain the host initiator methionine tRNA (tRNA(i)-Met) which serves as a primer for minus-strand DNA synthesis, and a dimer of genomic Ty RNA. Processing of the polyproteins occurs within the particle and proceeds by an ordered pathway, called maturation. First, the protease (PR) is released by autocatalytic cleavage of the Gag-Pol polyprotein yielding capsid protein p45 and a Pol-p154 precursor protein. This cleavage is a prerequisite for subsequent processing of Pol-p154 at the remaining sites to release the mature structural and catalytic proteins. Maturation takes place prior to the RT reaction and is required to produce transposition-competent VLPs.

It localises to the cytoplasm. The protein localises to the nucleus. It catalyses the reaction DNA(n) + a 2'-deoxyribonucleoside 5'-triphosphate = DNA(n+1) + diphosphate. The catalysed reaction is Endonucleolytic cleavage to 5'-phosphomonoester.. Capsid protein (CA) is the structural component of the virus-like particle (VLP), forming the shell that encapsulates the retrotransposons dimeric RNA genome. The particles are assembled from trimer-clustered units and there are holes in the capsid shells that allow for the diffusion of macromolecules. CA also has nucleocapsid-like chaperone activity, promoting primer tRNA(i)-Met annealing to the multipartite primer-binding site (PBS), dimerization of Ty1 RNA and initiation of reverse transcription. In terms of biological role, the aspartyl protease (PR) mediates the proteolytic cleavages of the Gag and Gag-Pol polyproteins after assembly of the VLP. Its function is as follows. Reverse transcriptase/ribonuclease H (RT) is a multifunctional enzyme that catalyzes the conversion of the retro-elements RNA genome into dsDNA within the VLP. The enzyme displays a DNA polymerase activity that can copy either DNA or RNA templates, and a ribonuclease H (RNase H) activity that cleaves the RNA strand of RNA-DNA heteroduplexes during plus-strand synthesis and hydrolyzes RNA primers. The conversion leads to a linear dsDNA copy of the retrotransposon that includes long terminal repeats (LTRs) at both ends. Functionally, integrase (IN) targets the VLP to the nucleus, where a subparticle preintegration complex (PIC) containing at least integrase and the newly synthesized dsDNA copy of the retrotransposon must transit the nuclear membrane. Once in the nucleus, integrase performs the integration of the dsDNA into the host genome. This is Transposon Ty1-ML1 Gag-Pol polyprotein (TY1B-ML1) from Saccharomyces cerevisiae (strain ATCC 204508 / S288c) (Baker's yeast).